The following is a 261-amino-acid chain: uncharacterized protein (261 aa).

22–46 (IVTGGNSGLGQAFAMALAKAGANIF) is an NADP(+) binding site. Residue serine 153 coordinates substrate. Tyrosine 166 serves as the catalytic Proton acceptor.

Belongs to the short-chain dehydrogenases/reductases (SDR) family.

This is an uncharacterized protein from Escherichia coli (strain K12).